Here is an 83-residue protein sequence, read N- to C-terminus: Small ribosomal subunit protein bS16 (83 aa).

Belongs to the bacterial ribosomal protein bS16 family.

This Pseudomonas fluorescens (strain Pf0-1) protein is Small ribosomal subunit protein bS16.